The chain runs to 558 residues: Transcription termination factor MTEF18, mitochondrial (558 aa).

A mitochondrion-targeting transit peptide spans 1-58; that stretch reads MFMVRLKFASISHNFSTVAAKHRRVPSKYKSLAIGKAQQAITDYLHTTRSLSYTHAEQ.

The protein belongs to the mTERF family.

The protein localises to the mitochondrion. Transcription termination factor involved in the regulation of mitochondrial-encoded gene expression. Essential for normal plant growth and development. The sequence is that of Transcription termination factor MTEF18, mitochondrial from Arabidopsis thaliana (Mouse-ear cress).